We begin with the raw amino-acid sequence, 92 residues long: Exodeoxyribonuclease 7 small subunit (92 aa).

Positions 1 to 22 are disordered; the sequence is MPKKNAISESTNSTPETAPAMT. The segment covering 7–16 has biased composition (polar residues); the sequence is ISESTNSTPE.

This sequence belongs to the XseB family. Heterooligomer composed of large and small subunits.

It is found in the cytoplasm. It catalyses the reaction Exonucleolytic cleavage in either 5'- to 3'- or 3'- to 5'-direction to yield nucleoside 5'-phosphates.. In terms of biological role, bidirectionally degrades single-stranded DNA into large acid-insoluble oligonucleotides, which are then degraded further into small acid-soluble oligonucleotides. The sequence is that of Exodeoxyribonuclease 7 small subunit from Photorhabdus laumondii subsp. laumondii (strain DSM 15139 / CIP 105565 / TT01) (Photorhabdus luminescens subsp. laumondii).